The following is a 460-amino-acid chain: Ribosomal protein uS12 methylthiotransferase RimO (460 aa).

In terms of domain architecture, MTTase N-terminal spans 17 to 128 (PAVAVLHLGC…IVQVIQRAER (112 aa)). The [4Fe-4S] cluster site is built by Cys26, Cys62, Cys91, Cys166, Cys170, and Cys173. The Radical SAM core domain occupies 152–381 (TTHAPVAYLR…MQLQQGIAFR (230 aa)). Residues 384–450 (REQVGQVVPV…PYDLFGQVVE (67 aa)) enclose the TRAM domain.

Belongs to the methylthiotransferase family. RimO subfamily. The cofactor is [4Fe-4S] cluster.

It localises to the cytoplasm. The catalysed reaction is L-aspartate(89)-[ribosomal protein uS12]-hydrogen + (sulfur carrier)-SH + AH2 + 2 S-adenosyl-L-methionine = 3-methylsulfanyl-L-aspartate(89)-[ribosomal protein uS12]-hydrogen + (sulfur carrier)-H + 5'-deoxyadenosine + L-methionine + A + S-adenosyl-L-homocysteine + 2 H(+). Catalyzes the methylthiolation of an aspartic acid residue of ribosomal protein uS12. This Synechococcus sp. (strain JA-3-3Ab) (Cyanobacteria bacterium Yellowstone A-Prime) protein is Ribosomal protein uS12 methylthiotransferase RimO.